Reading from the N-terminus, the 609-residue chain is Elongation factor 4 (609 aa).

In terms of domain architecture, tr-type G spans 11–193; the sequence is SRIRNFSIIA…QIVEKVPAPS (183 aa). Residues 23 to 28 and 140 to 143 contribute to the GTP site; these read DHGKST and NKID.

Belongs to the TRAFAC class translation factor GTPase superfamily. Classic translation factor GTPase family. LepA subfamily.

It localises to the cell membrane. It carries out the reaction GTP + H2O = GDP + phosphate + H(+). Required for accurate and efficient protein synthesis under certain stress conditions. May act as a fidelity factor of the translation reaction, by catalyzing a one-codon backward translocation of tRNAs on improperly translocated ribosomes. Back-translocation proceeds from a post-translocation (POST) complex to a pre-translocation (PRE) complex, thus giving elongation factor G a second chance to translocate the tRNAs correctly. Binds to ribosomes in a GTP-dependent manner. This chain is Elongation factor 4, found in Halalkalibacterium halodurans (strain ATCC BAA-125 / DSM 18197 / FERM 7344 / JCM 9153 / C-125) (Bacillus halodurans).